Consider the following 405-residue polypeptide: Arginine biosynthesis bifunctional protein ArgJ (405 aa).

The segment covering 1–18 has biased composition (polar residues); that stretch reads MTSADKNNPDTSTAQGSS. The interval 1 to 21 is disordered; that stretch reads MTSADKNNPDTSTAQGSSADL. Positions 167, 189, 200, 281, 400, and 405 each coordinate substrate. T200 serves as the catalytic Nucleophile.

The protein belongs to the ArgJ family. As to quaternary structure, heterotetramer of two alpha and two beta chains.

It is found in the cytoplasm. It carries out the reaction N(2)-acetyl-L-ornithine + L-glutamate = N-acetyl-L-glutamate + L-ornithine. It catalyses the reaction L-glutamate + acetyl-CoA = N-acetyl-L-glutamate + CoA + H(+). It participates in amino-acid biosynthesis; L-arginine biosynthesis; L-ornithine and N-acetyl-L-glutamate from L-glutamate and N(2)-acetyl-L-ornithine (cyclic): step 1/1. Its pathway is amino-acid biosynthesis; L-arginine biosynthesis; N(2)-acetyl-L-ornithine from L-glutamate: step 1/4. In terms of biological role, catalyzes two activities which are involved in the cyclic version of arginine biosynthesis: the synthesis of N-acetylglutamate from glutamate and acetyl-CoA as the acetyl donor, and of ornithine by transacetylation between N(2)-acetylornithine and glutamate. This chain is Arginine biosynthesis bifunctional protein ArgJ, found in Corynebacterium jeikeium (strain K411).